A 365-amino-acid chain; its full sequence is Geranylgeranyl pyrophosphate synthase (365 aa).

Over residues 1–11 (MKPLPSTNGKV) the composition is skewed to polar residues. The interval 1-36 (MKPLPSTNGKVNGNGKHHDSSLSSTSSTSSSSSSDT) is disordered. The span at 21–34 (SLSSTSSTSSSSSS) shows a compositional bias: low complexity. Isopentenyl diphosphate contacts are provided by Lys78, Arg81, and His110. Residues Asp117 and Asp121 each coordinate Mg(2+). Residue Arg126 coordinates dimethylallyl diphosphate. Arg127 contacts isopentenyl diphosphate. Residues Lys211, Thr212, and Gln247 each contribute to the dimethylallyl diphosphate site. Residue Asp250 coordinates Mg(2+). Dimethylallyl diphosphate-binding residues include Asn254, Lys263, and Lys273.

The protein belongs to the FPP/GGPP synthase family. Mg(2+) is required as a cofactor.

The enzyme catalyses isopentenyl diphosphate + dimethylallyl diphosphate = (2E)-geranyl diphosphate + diphosphate. It carries out the reaction isopentenyl diphosphate + (2E)-geranyl diphosphate = (2E,6E)-farnesyl diphosphate + diphosphate. It catalyses the reaction isopentenyl diphosphate + (2E,6E)-farnesyl diphosphate = (2E,6E,10E)-geranylgeranyl diphosphate + diphosphate. In terms of biological role, geranylgeranyl pyrophosphate synthase that catalyzes the trans-addition of the three molecules of IPP onto DMAPP to form geranylgeranyl pyrophosphate. Does not show any monoterpene nor sesquiterpene synthase activity. The chain is Geranylgeranyl pyrophosphate synthase from Melampsora lini (Rust fungus).